A 109-amino-acid chain; its full sequence is Class I hydrophobin 18 (109 aa).

A signal peptide spans 1–20 (MFTEQVLNVIILLQTATVTA). Intrachain disulfides connect Cys-28-Cys-88, Cys-35-Cys-82, Cys-36-Cys-69, and Cys-89-Cys-102. N-linked (GlcNAc...) asparagine glycans are attached at residues Asn-91 and Asn-106.

This sequence belongs to the fungal hydrophobin family. Self-assembles to form functional amyloid fibrils called rodlets. Self-assembly into fibrillar rodlets occurs spontaneously at hydrophobic:hydrophilic interfaces and the rodlets further associate laterally to form amphipathic monolayers.

It localises to the secreted. Its subcellular location is the cell wall. Functionally, aerial growth, conidiation, and dispersal of filamentous fungi in the environment rely upon a capability of their secreting small amphipathic proteins called hydrophobins (HPBs) with low sequence identity. Class I can self-assemble into an outermost layer of rodlet bundles on aerial cell surfaces, conferring cellular hydrophobicity that supports fungal growth, development and dispersal; whereas Class II form highly ordered films at water-air interfaces through intermolecular interactions but contribute nothing to the rodlet structure. This chain is Class I hydrophobin 18, found in Pleurotus ostreatus (strain PC15) (Oyster mushroom).